Reading from the N-terminus, the 490-residue chain is Tryptophan 5-hydroxylase 2 (490 aa).

Residue Ser19 is modified to Phosphoserine. A disordered region spans residues 34–62 (LTLNKANSGKNDDKGNKGSSKNETATESG). A compositionally biased stretch (polar residues) spans 50 to 62 (KGSSKNETATESG). Residues 65–140 (AVVFSLKNEV…TIVTLNPPEN (76 aa)) enclose the ACT domain. Residues His318, His323, and Glu363 each coordinate Fe cation.

It belongs to the biopterin-dependent aromatic amino acid hydroxylase family. In terms of assembly, interacts with DNAJC12. Requires Fe(2+) as cofactor.

It catalyses the reaction (6R)-L-erythro-5,6,7,8-tetrahydrobiopterin + L-tryptophan + O2 = 5-hydroxy-L-tryptophan + (4aS,6R)-4a-hydroxy-L-erythro-5,6,7,8-tetrahydrobiopterin. It participates in aromatic compound metabolism; serotonin biosynthesis; serotonin from L-tryptophan: step 1/2. The polypeptide is Tryptophan 5-hydroxylase 2 (TPH2) (Macaca mulatta (Rhesus macaque)).